Reading from the N-terminus, the 69-residue chain is Large ribosomal subunit protein uL29 (69 aa).

The protein belongs to the universal ribosomal protein uL29 family.

The polypeptide is Large ribosomal subunit protein uL29 (Oenococcus oeni (strain ATCC BAA-331 / PSU-1)).